Reading from the N-terminus, the 120-residue chain is Large ribosomal subunit protein uL14 (120 aa).

This sequence belongs to the universal ribosomal protein uL14 family. In terms of assembly, part of the 50S ribosomal subunit. Forms a cluster with proteins L3 and L19. In the 70S ribosome, L14 and L19 interact and together make contacts with the 16S rRNA in bridges B5 and B8.

Binds to 23S rRNA. Forms part of two intersubunit bridges in the 70S ribosome. This chain is Large ribosomal subunit protein uL14, found in Dictyoglomus turgidum (strain DSM 6724 / Z-1310).